The sequence spans 359 residues: Fructose-bisphosphate aldolase (359 aa).

Serine 50 is a binding site for D-glyceraldehyde 3-phosphate. Aspartate 83 acts as the Proton donor in catalysis. Zn(2+) contacts are provided by histidine 84, aspartate 105, glutamate 142, and histidine 198. Glycine 199 contributes to the dihydroxyacetone phosphate binding site. Histidine 232 contributes to the Zn(2+) binding site. Residues 233 to 235 and 275 to 278 contribute to the dihydroxyacetone phosphate site; these read GSS and NIDT.

Belongs to the class II fructose-bisphosphate aldolase family. In terms of assembly, homodimer. Requires Zn(2+) as cofactor.

It catalyses the reaction beta-D-fructose 1,6-bisphosphate = D-glyceraldehyde 3-phosphate + dihydroxyacetone phosphate. It functions in the pathway carbohydrate biosynthesis; Calvin cycle. It participates in carbohydrate degradation; glycolysis; D-glyceraldehyde 3-phosphate and glycerone phosphate from D-glucose: step 4/4. In terms of biological role, catalyzes the aldol condensation of dihydroxyacetone phosphate (DHAP or glycerone-phosphate) with glyceraldehyde 3-phosphate (G3P) to form fructose 1,6-bisphosphate (FBP) in gluconeogenesis and the reverse reaction in glycolysis. This Rhizobium meliloti (strain 1021) (Ensifer meliloti) protein is Fructose-bisphosphate aldolase (cbbA).